The chain runs to 272 residues: Dioscorin DB3L (272 aa).

The signal sequence occupies residues 1-25 (MSSSTLFHLFLLSSLLFSCLSNARP). The Alpha-carbonic anhydrase domain occupies 28 to 263 (DDFSYIEGSP…LKFRTIFFYP (236 aa)). C53 and C213 are disulfide-bonded.

This sequence belongs to the alpha-class carbonic anhydrase family. Homodimer; disulfide-linked. Not glycosylated. As to expression, expressed in tuber (at protein level).

Its activity is regulated as follows. Loss of hemagglutinating activity by EDTA treatment. The activity is fully recovered by the addition of 5 mM Ca(2+) ions, but not with Mg(2+) and Mn 2(+). Hemagglutination activity is inhibited by maltose and its derivatives, with maltopentaose and maltohexaose being the best inhibitors followed by maltose and iso maltose. Not inhibited by glycoproteins. Its function is as follows. Maltose-binding lectin. No affinity is detected toward glucose. Has hemagglutinating activity against rabbit erythrocytes at 3.9 ug/ml. No carbonate dehydratase or trypsin inhibitor activity detected by measuring the hydrolysis of 4-nitrophenyl acetate or the inhibition of bovine trypsin-catalyzed hydrolysis of N-benzoyl-L-arginine ethyl ester, respectively. The sequence is that of Dioscorin DB3L from Dioscorea polystachya (Chinese yam).